Reading from the N-terminus, the 82-residue chain is Neuromacin (82 aa).

The N-terminal stretch at 1–23 (MALLNKLLCFALVFMIFGEFVTP) is a signal peptide. Disulfide bonds link Cys-25–Cys-32, Cys-47–Cys-51, Cys-61–Cys-69, and Cys-79–Cys-81.

The protein belongs to the macin family.

It is found in the secreted. This is Neuromacin from Hirudo medicinalis (Medicinal leech).